Consider the following 173-residue polypeptide: Large ribosomal subunit protein uL16 (173 aa).

Belongs to the universal ribosomal protein uL16 family.

This Methanosarcina mazei (strain ATCC BAA-159 / DSM 3647 / Goe1 / Go1 / JCM 11833 / OCM 88) (Methanosarcina frisia) protein is Large ribosomal subunit protein uL16.